Here is a 260-residue protein sequence, read N- to C-terminus: Carbonic anhydrase 2 (260 aa).

Position 2 is an N-acetylserine (S2). At S2 the chain carries Phosphoserine. The Alpha-carbonic anhydrase domain maps to 3-259 (HHWGYGKHNG…LKGRQVKASF (257 aa)). H64 acts as the Proton donor/acceptor in catalysis. Zn(2+) is bound by residues H94, H96, and H119. A phosphoserine mark is found at S165 and S172. 198 to 199 (TT) is a substrate binding site.

It belongs to the alpha-carbonic anhydrase family. Interacts with SLC4A4 and SLC26A6. Interaction with SLC4A7 regulates SLC4A7 transporter activity. It depends on Zn(2+) as a cofactor.

The protein localises to the cytoplasm. The protein resides in the cell membrane. It catalyses the reaction hydrogencarbonate + H(+) = CO2 + H2O. The enzyme catalyses urea = cyanamide + H2O. Its activity is regulated as follows. Inhibited by acetazolamide. Functionally, catalyzes the reversible hydration of carbon dioxide. Can also hydrate cyanamide to urea. Involved in the regulation of fluid secretion into the anterior chamber of the eye. Essential for bone resorption and osteoclast differentiation. Contributes to intracellular pH regulation in the duodenal upper villous epithelium during proton-coupled peptide absorption. Stimulates the chloride-bicarbonate exchange activity of SLC26A6. This is Carbonic anhydrase 2 (CA2) from Oryctolagus cuniculus (Rabbit).